Here is a 485-residue protein sequence, read N- to C-terminus: Vacuolar fusion protein CCZ1 homolog (485 aa).

The protein belongs to the CCZ1 family. In terms of assembly, component of the Mon1-Ccz1 guanyl-nucleotide exchange factor complex made up of Mon1, Ccz1 and Bulli; the interaction of Bulli with the Mon1-Ccz1 heterodimer is mediated via the C-terminal Mic1 domain of Bulli. Mon1 and Ccz1 form a stable complex which displays Rab7 GEF activity with or without Bulli; GEF activity is enhanced by Bulli possibly by improving membrane association of the complex. Interacts with Rab5 and Rab7; preferentially binds GTP-bound Rab5 and GDP-bound Rab7.

The protein resides in the cytoplasm. The protein localises to the cytosol. Its activity is regulated as follows. The Rab7 guanyl-nucleotide exchange factor (GEF) activity of the Mon1-Ccz1 complex is autoinhibited by the N-terminal disordered region of Mon1. GEF activity is stimulated by Rab5-mediated recruitment to membranes. In terms of biological role, part of the Mon1-Ccz1 guanyl-nucleotide exchange factor complex specific for Rab7 that promotes the exchange of GDP to GTP, converting Rab7 from an inactive GDP-bound form into an active GTP-bound form. Required for recruitment of Rab7 to endosomal and autophagosomal membranes to mediate endolysosomal and autolysosomal vesicle maturation. Required for fusion of multivesicular bodies and lysosomes but not their formation or trafficking. Involved in the replacement of Rab5 (and possibly Rab4) with Rab7, also known as Rab conversion or the Rab cascade, during endosomal maturation. The Mon1-Ccz1 complex is recruited to phosphatidylinositol 3-phosphate (PtdIns[3]P) enriched membranes by Rab5, which stimulates recruitment and guanyl-nucleotide exchange of Rab7. Together with Rab7 required for autolysosome formation in fat cells and autophagic degradation during starvation-induced basal and developmental autophagy. The polypeptide is Vacuolar fusion protein CCZ1 homolog (Drosophila melanogaster (Fruit fly)).